The primary structure comprises 428 residues: Histidinol dehydrogenase (428 aa).

Residues Ser234, Gln256, and His259 each contribute to the substrate site. Positions 256 and 259 each coordinate Zn(2+). Residues Glu324 and His325 each act as proton acceptor in the active site. Substrate-binding residues include His325, Asp358, Glu412, and His417. Asp358 provides a ligand contact to Zn(2+). Residue His417 coordinates Zn(2+).

The protein belongs to the histidinol dehydrogenase family. The cofactor is Zn(2+).

It carries out the reaction L-histidinol + 2 NAD(+) + H2O = L-histidine + 2 NADH + 3 H(+). Its pathway is amino-acid biosynthesis; L-histidine biosynthesis; L-histidine from 5-phospho-alpha-D-ribose 1-diphosphate: step 9/9. Catalyzes the sequential NAD-dependent oxidations of L-histidinol to L-histidinaldehyde and then to L-histidine. This chain is Histidinol dehydrogenase, found in Pelagibacter ubique (strain HTCC1062).